Consider the following 84-residue polypeptide: Small ribosomal subunit protein uS17 (84 aa).

This sequence belongs to the universal ribosomal protein uS17 family. As to quaternary structure, part of the 30S ribosomal subunit.

In terms of biological role, one of the primary rRNA binding proteins, it binds specifically to the 5'-end of 16S ribosomal RNA. This is Small ribosomal subunit protein uS17 from Clostridium botulinum (strain Okra / Type B1).